A 102-amino-acid chain; its full sequence is MNGQNIRIRLKAFDHRVLDASTREIVSTAKRTGASVRGPVPLPTRIEKFTVNRSPHVDKKSREQFEMRTHKRLLDIVDPTPQTVDALMKLDLAAGVDVEIKL.

It belongs to the universal ribosomal protein uS10 family. Part of the 30S ribosomal subunit.

Its function is as follows. Involved in the binding of tRNA to the ribosomes. The sequence is that of Small ribosomal subunit protein uS10 from Allorhizobium ampelinum (strain ATCC BAA-846 / DSM 112012 / S4) (Agrobacterium vitis (strain S4)).